Consider the following 237-residue polypeptide: MRLRVDVIPGEHLAYPDVVLVVDVIRATTTAAAFLEAGAEALYWTPSLESALAFKDEDVVLAGETGGLKPPRFDLGNSPREALSAQVAGRVVVMSTTNGTKAAHAAARTAKHVLLASLYNAHAAARLARELATEEVAILCAGKEGRAGLDDLYTAGVLAEYLGFLGEVEPEDGARVALAVKRAYPDPLEALSLSAAALALKQVGLEADVPFCAQVAKSAAVPVLRGRVGEALIFKRA.

The protein belongs to the ComB family. Requires Mg(2+) as cofactor.

The enzyme catalyses (2R)-O-phospho-3-sulfolactate + H2O = (2R)-3-sulfolactate + phosphate. The protein is Probable 2-phosphosulfolactate phosphatase of Thermus thermophilus (strain ATCC 27634 / DSM 579 / HB8).